Consider the following 93-residue polypeptide: Protein NONRESPONDING TO OXYLIPINS 2, mitochondrial (93 aa).

The N-terminal 27 residues, 1–27, are a transit peptide targeting the mitochondrion; it reads MASRCRSLSKPAFSAFRSAMNKPSIRP.

In terms of tissue distribution, expressed in cotyledons, roots and flowers.

The protein resides in the mitochondrion. Functionally, essential for mitochondrial morphology, functionality and distribution. Contributes to 9-lipoxygenase (9-LOX)-derived oxylipin synthesis, but not to brassinosteroids (BRs) signaling. Required for waving-inducing oxylipin 9-hydroxyoctadecatrienoic acid and derivatives (e.g. 9-HOT, 2-HOE, 13-HOT, 13-HOD, 13-KOD, 12,13-KHOD, 9-HOT, 9-HOD, 9-KOT, 9-KOD and 9,10-KHOE)-mediated root development regulation, including callose deposition, root waving and lateral roots formation. Involved in basal plant defense toward pathogenic bacteria (e.g. Pseudomonas syringae pv tomato), both in compatible (e.g. Pst DC3000) and incompatible (e.g. Pst DC3000 avrRPM1) interactions, as well as against obligate biotrophic pathogenic fungi (e.g. Golovinomyces cichoracearum), probably via the promotion of callose deposition in the cell wall. Confers sensitivity to the herbicide isoxaben, a herbicide inhibiting cellulose synthesis and altering the cell wall. This Arabidopsis thaliana (Mouse-ear cress) protein is Protein NONRESPONDING TO OXYLIPINS 2, mitochondrial.